We begin with the raw amino-acid sequence, 149 residues long: Transcriptional repressor NrdR (149 aa).

A zinc finger spans residues 3 to 34 (CPFCSATDTKVIDSRLVADGHQVRRRRECVQC). The ATP-cone domain maps to 49-139 (PRVVKQDGSR…VYRAFEDVSE (91 aa)).

Belongs to the NrdR family. Requires Zn(2+) as cofactor.

Functionally, negatively regulates transcription of bacterial ribonucleotide reductase nrd genes and operons by binding to NrdR-boxes. This chain is Transcriptional repressor NrdR, found in Shewanella piezotolerans (strain WP3 / JCM 13877).